The primary structure comprises 282 residues: Probable xyloglucan endotransglucosylase/hydrolase protein 18 (282 aa).

An N-terminal signal peptide occupies residues 1-26; the sequence is MKLSCGTSFAFLIMFLFAAQSMHVYA. Residues 27-218 enclose the GH16 domain; that stretch reads GSFHKDVQIH…WSKAPFTAFY (192 aa). The active-site Nucleophile is glutamate 104. Glutamate 108 (proton donor) is an active-site residue. Glutamate 108 provides a ligand contact to xyloglucan. Asparagine 112 is a glycosylation site (N-linked (GlcNAc...) asparagine). Residues 121–123, 131–133, 197–198, and glycine 202 each bind xyloglucan; these read HTN, DKE, and HW. Cysteine 226 and cysteine 235 form a disulfide bridge. Asparagine 238 is a glycosylation site (N-linked (GlcNAc...) asparagine). The cysteines at positions 267 and 281 are disulfide-linked. Xyloglucan is bound at residue arginine 272.

Belongs to the glycosyl hydrolase 16 family. XTH group 2 subfamily. Contains at least one intrachain disulfide bond essential for its enzymatic activity. As to expression, root specific.

The protein localises to the secreted. It localises to the cell wall. It is found in the extracellular space. The protein resides in the apoplast. The catalysed reaction is breaks a beta-(1-&gt;4) bond in the backbone of a xyloglucan and transfers the xyloglucanyl segment on to O-4 of the non-reducing terminal glucose residue of an acceptor, which can be a xyloglucan or an oligosaccharide of xyloglucan.. In terms of biological role, catalyzes xyloglucan endohydrolysis (XEH) and/or endotransglycosylation (XET). Cleaves and religates xyloglucan polymers, an essential constituent of the primary cell wall, and thereby participates in cell wall construction of growing tissues. The sequence is that of Probable xyloglucan endotransglucosylase/hydrolase protein 18 (XTH18) from Arabidopsis thaliana (Mouse-ear cress).